A 498-amino-acid polypeptide reads, in one-letter code: Angiopoietin-4 (498 aa).

Residues 1-22 (MPSPPAMLLGGLLLIVASTTVA) form the signal peptide. Residues 51–80 (EPEPCPPEPEAFGGSNSLQRDSPAATLNLG) are disordered. A coiled-coil region spans residues 85-109 (QRMRQLEKMLENNTQWLQKLERYIQ). N-linked (GlcNAc...) asparagine glycosylation is found at asparagine 96, asparagine 126, asparagine 158, asparagine 247, asparagine 295, asparagine 306, asparagine 332, and asparagine 424. Residues 186–254 (HELHRLQGHN…SSNSSLLQRQ (69 aa)) adopt a coiled-coil conformation. The Fibrinogen C-terminal domain occupies 277–497 (RAADQLFQDC…TTRMMVRPSG (221 aa)). Cysteine 286 and cysteine 315 are joined by a disulfide. The cysteines at positions 439 and 452 are disulfide-linked.

Homodimer; disulfide-linked. Interacts with TEK/TIE2.

It localises to the secreted. In terms of biological role, binds to TEK/TIE2, modulating ANGPT1 signaling. Can induce tyrosine phosphorylation of TEK/TIE2. Promotes endothelial cell survival, migration and angiogenesis. This is Angiopoietin-4 (ANGPT4) from Bos taurus (Bovine).